The chain runs to 336 residues: Biotin synthase (336 aa).

One can recognise a Radical SAM core domain in the interval 54–281; the sequence is NAIQLSTLLS…KAMVRLSAGR (228 aa). The [4Fe-4S] cluster site is built by Cys-69, Cys-73, and Cys-76. [2Fe-2S] cluster contacts are provided by Cys-113, Cys-144, Cys-204, and Arg-276.

This sequence belongs to the radical SAM superfamily. Biotin synthase family. In terms of assembly, homodimer. The cofactor is [4Fe-4S] cluster. [2Fe-2S] cluster serves as cofactor.

It carries out the reaction (4R,5S)-dethiobiotin + (sulfur carrier)-SH + 2 reduced [2Fe-2S]-[ferredoxin] + 2 S-adenosyl-L-methionine = (sulfur carrier)-H + biotin + 2 5'-deoxyadenosine + 2 L-methionine + 2 oxidized [2Fe-2S]-[ferredoxin]. It functions in the pathway cofactor biosynthesis; biotin biosynthesis; biotin from 7,8-diaminononanoate: step 2/2. Functionally, catalyzes the conversion of dethiobiotin (DTB) to biotin by the insertion of a sulfur atom into dethiobiotin via a radical-based mechanism. The chain is Biotin synthase from Burkholderia pseudomallei (strain 1106a).